Reading from the N-terminus, the 249-residue chain is UPF0758 protein Oant_1909 (249 aa).

One can recognise an MPN domain in the interval 127-249 (VLGSWNKVIE…HASFRGLGLI (123 aa)). Zn(2+)-binding residues include H198, H200, and D211. The JAMM motif signature appears at 198–211 (HNHPSGDPTPSRAD).

This sequence belongs to the UPF0758 family.

The protein is UPF0758 protein Oant_1909 of Brucella anthropi (strain ATCC 49188 / DSM 6882 / CCUG 24695 / JCM 21032 / LMG 3331 / NBRC 15819 / NCTC 12168 / Alc 37) (Ochrobactrum anthropi).